The sequence spans 206 residues: Probable GTP-binding protein EngB (206 aa).

Residues 24-198 form the EngB-type G domain; sequence QGREVAFAGR…HARLDEWLGL (175 aa). GTP-binding positions include 32 to 39, 59 to 63, 77 to 80, 144 to 147, and 177 to 179; these read GRSNVGKS, GRTQL, DLPG, TKAD, and FSA. Residues serine 39 and threonine 61 each contribute to the Mg(2+) site.

This sequence belongs to the TRAFAC class TrmE-Era-EngA-EngB-Septin-like GTPase superfamily. EngB GTPase family. It depends on Mg(2+) as a cofactor.

Functionally, necessary for normal cell division and for the maintenance of normal septation. This Alkalilimnicola ehrlichii (strain ATCC BAA-1101 / DSM 17681 / MLHE-1) protein is Probable GTP-binding protein EngB.